A 201-amino-acid polypeptide reads, in one-letter code: ADP-ribosylation factor-related protein 1 (201 aa).

Met1 bears the N-acetylmethionine mark. GTP contacts are provided by residues 24 to 31 (GLDNAGKT), 75 to 79 (DLGGQ), and 134 to 137 (NKQD).

Belongs to the small GTPase superfamily. Arf family. Interacts with SYS1.

The protein localises to the golgi apparatus. It localises to the trans-Golgi network. Its function is as follows. Trans-Golgi-associated GTPase that regulates protein sorting. Controls the targeting of ARL1 and its effector to the trans-Golgi. Required for the lipidation of chylomicrons in the intestine and required for VLDL lipidation in the liver. The protein is ADP-ribosylation factor-related protein 1 (Arfrp1) of Mus musculus (Mouse).